Here is a 1094-residue protein sequence, read N- to C-terminus: Probable arabinosyltransferase A (1094 aa).

The next 13 helical transmembrane spans lie at Ile12–Leu34, Ala205–Leu224, Gly247–Ala269, Val322–Leu344, Ser356–Phe375, Ala408–Ala430, Gly451–Val470, Phe519–Leu536, Gly543–Phe565, Gly575–Leu597, Thr604–Tyr626, Ile641–Trp663, and Ile684–Ala706.

It belongs to the emb family.

It is found in the cell membrane. In terms of biological role, arabinosyl transferase responsible for the polymerization of arabinose into the arabinan of arabinogalactan. The chain is Probable arabinosyltransferase A (embA) from Mycobacterium tuberculosis (strain CDC 1551 / Oshkosh).